Consider the following 254-residue polypeptide: Alcohol dehydrogenase (254 aa).

10 to 33 (FVAGLGGIGLDTSREIVKSGPKNL) serves as a coordination point for NAD(+). Position 138 (Ser-138) interacts with substrate. The active-site Proton acceptor is the Tyr-151.

This sequence belongs to the short-chain dehydrogenases/reductases (SDR) family. Homodimer.

It carries out the reaction a primary alcohol + NAD(+) = an aldehyde + NADH + H(+). It catalyses the reaction a secondary alcohol + NAD(+) = a ketone + NADH + H(+). This Drosophila picticornis (Fruit fly) protein is Alcohol dehydrogenase (Adh).